The sequence spans 393 residues: Rubredoxin-NAD(+) reductase (393 aa).

Residues 9–12 (SGMA), 33–34 (CA), Lys42, Val80, Glu162, Asp282, Val294, and Lys325 each bind FAD.

This sequence belongs to the FAD-dependent oxidoreductase family. Homodimer. It depends on FAD as a cofactor.

It localises to the cytoplasm. The catalysed reaction is 2 reduced [rubredoxin] + NAD(+) + H(+) = 2 oxidized [rubredoxin] + NADH. It participates in hydrocarbon metabolism; alkane degradation. Involved in the hydrocarbon hydroxylating system, which transfers electrons from NADH to rubredoxin reductase and then through rubredoxin to alkane 1 monooxygenase. This chain is Rubredoxin-NAD(+) reductase (rubB), found in Acinetobacter baylyi (strain ATCC 33305 / BD413 / ADP1).